The primary structure comprises 581 residues: Arginine--tRNA ligase (581 aa).

The short motif at 126–136 (PNLAKEMHVGH) is the 'HIGH' region element.

Belongs to the class-I aminoacyl-tRNA synthetase family. Monomer.

The protein localises to the cytoplasm. It carries out the reaction tRNA(Arg) + L-arginine + ATP = L-arginyl-tRNA(Arg) + AMP + diphosphate. This chain is Arginine--tRNA ligase, found in Shewanella sp. (strain MR-4).